The following is a 46-amino-acid chain: Escargot/snail protein homolog (46 aa).

3 consecutive C2H2-type zinc fingers follow at residues 1–4, 8–30, and 36–46; these read IRTH, CKCP…TTHH, and FSCQHCNRAFA.

This sequence belongs to the snail C2H2-type zinc-finger protein family.

It localises to the nucleus. The sequence is that of Escargot/snail protein homolog from Oryzias latipes (Japanese rice fish).